Here is a 20-residue protein sequence, read N- to C-terminus: Antimicrobial peptide AJN-10 (20 aa).

Its subcellular location is the secreted. Functionally, displays antimicrobial activity against the Gram-negative bacterium A.hydrophila. The sequence is that of Antimicrobial peptide AJN-10 from Anguilla japonica (Japanese eel).